The primary structure comprises 56 residues: Small integral membrane protein 39 (56 aa).

Residues 33 to 53 (VVVSAVLALLVLINVVLIFLL) traverse the membrane as a helical segment.

The protein resides in the membrane. This is Small integral membrane protein 39 from Homo sapiens (Human).